Consider the following 80-residue polypeptide: Exodeoxyribonuclease 7 small subunit (80 aa).

It belongs to the XseB family. As to quaternary structure, heterooligomer composed of large and small subunits.

The protein localises to the cytoplasm. It catalyses the reaction Exonucleolytic cleavage in either 5'- to 3'- or 3'- to 5'-direction to yield nucleoside 5'-phosphates.. In terms of biological role, bidirectionally degrades single-stranded DNA into large acid-insoluble oligonucleotides, which are then degraded further into small acid-soluble oligonucleotides. This chain is Exodeoxyribonuclease 7 small subunit, found in Rickettsia felis (strain ATCC VR-1525 / URRWXCal2) (Rickettsia azadi).